The chain runs to 1226 residues: Methionine synthase (1226 aa).

The 321-residue stretch at 7 to 327 folds into the Hcy-binding domain; sequence KVQIEKQLSE…EHIRQMALVV (321 aa). 3 residues coordinate Zn(2+): Cys-249, Cys-312, and Cys-313. The region spanning 358–619 is the Pterin-binding domain; that stretch reads FINVGERTNV…VPEDLREAVE (262 aa). Residues 652-746 enclose the B12-binding N-terminal domain; sequence SALEWRDWPV…FINASKEVGA (95 aa). Methylcob(III)alamin is bound by residues Glu-696, 758–762, His-761, Ser-806, Thr-810, and Ala-862; that span reads GDVHD. The region spanning 748–883 is the B12-binding domain; sequence NGKILLATVK…SDELKPSFVE (136 aa). The AdoMet activation domain occupies 899 to 1226; sequence KQPRTKPVTL…AEKWLGPNLN (328 aa). S-adenosyl-L-methionine-binding positions include Asp-949, Arg-1137, and 1192 to 1193; that span reads YF.

This sequence belongs to the vitamin-B12 dependent methionine synthase family. Methylcob(III)alamin serves as cofactor. The cofactor is Zn(2+).

It catalyses the reaction (6S)-5-methyl-5,6,7,8-tetrahydrofolate + L-homocysteine = (6S)-5,6,7,8-tetrahydrofolate + L-methionine. Its pathway is amino-acid biosynthesis; L-methionine biosynthesis via de novo pathway; L-methionine from L-homocysteine (MetH route): step 1/1. Its function is as follows. Catalyzes the transfer of a methyl group from methyl-cobalamin to homocysteine, yielding enzyme-bound cob(I)alamin and methionine. Subsequently, remethylates the cofactor using methyltetrahydrofolate. The protein is Methionine synthase (metH) of Aliivibrio fischeri (strain ATCC 700601 / ES114) (Vibrio fischeri).